Consider the following 671-residue polypeptide: tRNA(Met) cytidine acetyltransferase TmcA (671 aa).

ATP contacts are provided by residues glutamine 180, glycine 202–glutamine 211, and arginine 319. One can recognise an N-acetyltransferase domain in the interval glutamine 356–leucine 531. Residues isoleucine 461 to valine 463, glutamine 468 to arginine 474, glutamate 499, and arginine 506 contribute to the acetyl-CoA site.

The protein belongs to the RNA cytidine acetyltransferase family. TmcA subfamily.

It is found in the cytoplasm. The enzyme catalyses cytidine(34) in elongator tRNA(Met) + acetyl-CoA + ATP + H2O = N(4)-acetylcytidine(34) in elongator tRNA(Met) + ADP + phosphate + CoA + H(+). Catalyzes the formation of N(4)-acetylcytidine (ac(4)C) at the wobble position of tRNA(Met), by using acetyl-CoA as an acetyl donor and ATP (or GTP). The polypeptide is tRNA(Met) cytidine acetyltransferase TmcA (Shigella flexneri serotype 5b (strain 8401)).